Here is a 469-residue protein sequence, read N- to C-terminus: NADH-quinone oxidoreductase subunit N (469 aa).

14 helical membrane passes run 2 to 22, 28 to 48, 70 to 90, 101 to 121, 122 to 142, 157 to 177, 194 to 214, 233 to 253, 261 to 281, 290 to 310, 315 to 335, 361 to 381, 398 to 418, and 447 to 467; these read IALL…FLCV, RYSI…FFIV, FSFC…ISSF, EMFA…LSVE, LILT…MIAM, FLLS…VFGV, FLSI…IAIF, GFLA…LCFL, ILQG…NLLS, ILIA…SSVG, IYPA…LFAI, AFAF…VGFL, LAIF…KIII, and ILFI…LNLF.

Belongs to the complex I subunit 2 family. NDH-1 is composed of 14 different subunits. Subunits NuoA, H, J, K, L, M, N constitute the membrane sector of the complex.

It localises to the cell inner membrane. The enzyme catalyses a quinone + NADH + 5 H(+)(in) = a quinol + NAD(+) + 4 H(+)(out). Functionally, NDH-1 shuttles electrons from NADH, via FMN and iron-sulfur (Fe-S) centers, to quinones in the respiratory chain. The immediate electron acceptor for the enzyme in this species is believed to be ubiquinone. Couples the redox reaction to proton translocation (for every two electrons transferred, four hydrogen ions are translocated across the cytoplasmic membrane), and thus conserves the redox energy in a proton gradient. The protein is NADH-quinone oxidoreductase subunit N of Campylobacter fetus subsp. fetus (strain 82-40).